A 91-amino-acid chain; its full sequence is Large ribosomal subunit protein eL34 (91 aa).

Positions 48-69 are disordered; it reads RGRPVEMRKLPKTKKRPERPMP.

The protein belongs to the eukaryotic ribosomal protein eL34 family.

This chain is Large ribosomal subunit protein eL34 (rpl34e), found in Pyrococcus horikoshii (strain ATCC 700860 / DSM 12428 / JCM 9974 / NBRC 100139 / OT-3).